The primary structure comprises 641 residues: Probable serine protease FE772_23065 (641 aa).

The helical transmembrane segment at 532–552 (WVELIAILAAAGWIRVMLIGL) threads the bilayer.

It belongs to the peptidase S1 family.

The protein localises to the cell inner membrane. Its function is as follows. Possibly a dedicated protease for substrate gasdermin bGSDM; cleaves the bGSDM precursor, releasing the pore-forming moiety, which integrates into the membrane and triggers cell death. Involved in defense against bacteriophages. When this probable 4 gene operon (bGSDM-FE772_23060-FE772_23065-FE772_23070) is inserted into E.coli it provides nearly 100-fold protection against phages T5 and T6 and about 8-fold against phage T4. The operon without bGSDM no longer protects against phage. This Lysobacter enzymogenes protein is Probable serine protease FE772_23065.